A 1092-amino-acid polypeptide reads, in one-letter code: DNA polymerase II large subunit (1092 aa).

It belongs to the archaeal DNA polymerase II family. In terms of assembly, heterodimer of a large subunit and a small subunit.

It carries out the reaction DNA(n) + a 2'-deoxyribonucleoside 5'-triphosphate = DNA(n+1) + diphosphate. It catalyses the reaction Exonucleolytic cleavage in the 3'- to 5'-direction to yield nucleoside 5'-phosphates.. In terms of biological role, possesses two activities: a DNA synthesis (polymerase) and an exonucleolytic activity that degrades single-stranded DNA in the 3'- to 5'-direction. Has a template-primer preference which is characteristic of a replicative DNA polymerase. The chain is DNA polymerase II large subunit (polC) from Methanothermobacter thermautotrophicus (strain ATCC 29096 / DSM 1053 / JCM 10044 / NBRC 100330 / Delta H) (Methanobacterium thermoautotrophicum).